Here is a 267-residue protein sequence, read N- to C-terminus: 4-hydroxy-tetrahydrodipicolinate reductase (267 aa).

NAD(+) is bound by residues glycine 8–methionine 13 and aspartate 34. Arginine 35 contributes to the NADP(+) binding site. NAD(+)-binding positions include glycine 98–threonine 100 and alanine 122–phenylalanine 125. Histidine 155 functions as the Proton donor/acceptor in the catalytic mechanism. Histidine 156 is a binding site for (S)-2,3,4,5-tetrahydrodipicolinate. The active-site Proton donor is lysine 159. Glycine 165–threonine 166 contributes to the (S)-2,3,4,5-tetrahydrodipicolinate binding site.

This sequence belongs to the DapB family.

The protein localises to the cytoplasm. It catalyses the reaction (S)-2,3,4,5-tetrahydrodipicolinate + NAD(+) + H2O = (2S,4S)-4-hydroxy-2,3,4,5-tetrahydrodipicolinate + NADH + H(+). The catalysed reaction is (S)-2,3,4,5-tetrahydrodipicolinate + NADP(+) + H2O = (2S,4S)-4-hydroxy-2,3,4,5-tetrahydrodipicolinate + NADPH + H(+). It participates in amino-acid biosynthesis; L-lysine biosynthesis via DAP pathway; (S)-tetrahydrodipicolinate from L-aspartate: step 4/4. Its function is as follows. Catalyzes the conversion of 4-hydroxy-tetrahydrodipicolinate (HTPA) to tetrahydrodipicolinate. The chain is 4-hydroxy-tetrahydrodipicolinate reductase from Pseudomonas savastanoi pv. phaseolicola (strain 1448A / Race 6) (Pseudomonas syringae pv. phaseolicola (strain 1448A / Race 6)).